Reading from the N-terminus, the 472-residue chain is Arginine biosynthesis bifunctional protein ArgJ, mitochondrial (472 aa).

6 residues coordinate substrate: Thr-200, Lys-229, Thr-240, Glu-327, Asn-467, and Thr-472. Thr-240 (nucleophile) is an active-site residue.

It belongs to the ArgJ family. In terms of assembly, heterodimer of an alpha and a beta chain. In terms of processing, the alpha and beta chains are autoproteolytically processed from a single precursor protein within the mitochondrion.

It is found in the mitochondrion matrix. It catalyses the reaction N(2)-acetyl-L-ornithine + L-glutamate = N-acetyl-L-glutamate + L-ornithine. It carries out the reaction L-glutamate + acetyl-CoA = N-acetyl-L-glutamate + CoA + H(+). It participates in amino-acid biosynthesis; L-arginine biosynthesis; L-ornithine and N-acetyl-L-glutamate from L-glutamate and N(2)-acetyl-L-ornithine (cyclic): step 1/1. It functions in the pathway amino-acid biosynthesis; L-arginine biosynthesis; N(2)-acetyl-L-ornithine from L-glutamate: step 1/4. Functionally, catalyzes two activities which are involved in the cyclic version of arginine biosynthesis: the synthesis of acetylglutamate from glutamate and acetyl-CoA, and of ornithine by transacetylation between acetylornithine and glutamate. The polypeptide is Arginine biosynthesis bifunctional protein ArgJ, mitochondrial (Talaromyces marneffei (strain ATCC 18224 / CBS 334.59 / QM 7333) (Penicillium marneffei)).